The chain runs to 219 residues: Nuclear transcription factor Y subunit B-8 (219 aa).

Residues 1-26 are disordered; sequence MPDSDNDSGGPSNYAGGELSSPREQD. The DNA-binding element occupies 29–35; sequence LPIANVS. The segment at 56-67 is subunit association domain (SAD); that stretch reads VQECVSEFISFI. Over residues 119 to 134 the composition is skewed to low complexity; sequence AAASTTGAGTSAASTT. 2 disordered regions span residues 119-142 and 166-219; these read AAASTTGAGTSAASTTPPQQQHTA and GQPM…NRGA. Over residues 190-206 the composition is skewed to gly residues; it reads GGRGGFGHHPGGGGGGS.

This sequence belongs to the NFYB/HAP3 subunit family. As to quaternary structure, heterotrimeric transcription factor composed of three components, NF-YA, NF-YB and NF-YC. NF-YB and NF-YC must interact and dimerize for NF-YA association and DNA binding. Interacts with NFYC2, NFYC4 and NFYC6.

The protein resides in the cytoplasm. In terms of biological role, component of the NF-Y/HAP transcription factor complex. The chain is Nuclear transcription factor Y subunit B-8 from Oryza sativa subsp. japonica (Rice).